We begin with the raw amino-acid sequence, 179 residues long: ATP synthase subunit delta (179 aa).

It belongs to the ATPase delta chain family. F-type ATPases have 2 components, F(1) - the catalytic core - and F(0) - the membrane proton channel. F(1) has five subunits: alpha(3), beta(3), gamma(1), delta(1), epsilon(1). F(0) has three main subunits: a(1), b(2) and c(10-14). The alpha and beta chains form an alternating ring which encloses part of the gamma chain. F(1) is attached to F(0) by a central stalk formed by the gamma and epsilon chains, while a peripheral stalk is formed by the delta and b chains.

It is found in the cell inner membrane. In terms of biological role, f(1)F(0) ATP synthase produces ATP from ADP in the presence of a proton or sodium gradient. F-type ATPases consist of two structural domains, F(1) containing the extramembraneous catalytic core and F(0) containing the membrane proton channel, linked together by a central stalk and a peripheral stalk. During catalysis, ATP synthesis in the catalytic domain of F(1) is coupled via a rotary mechanism of the central stalk subunits to proton translocation. Functionally, this protein is part of the stalk that links CF(0) to CF(1). It either transmits conformational changes from CF(0) to CF(1) or is implicated in proton conduction. The chain is ATP synthase subunit delta from Acidithiobacillus ferridurans.